A 154-amino-acid polypeptide reads, in one-letter code: Avirulence protein ATR13 (154 aa).

The N-terminal stretch at 1–19 is a signal peptide; sequence MRLVHAVLLPGIIVFVSNG. A RxLR motif is present at residues 38 to 41; that stretch reads RQLR. Residues 50–92 are leucine heptad repeat region; that stretch reads LSRASFGLGKAQDPLDKFFSKIIFSGKPIETSYSAKGIHEKII. The single repeat region stretch occupies residues 93–103; it reads EAHDLHVSKSK. Residues 104 to 154 form a highly variable C-terminus domain region; that stretch reads NAPIQYASVMEYLKKTYPGPDIERIVSTLERHDEVGAKDLGAKLRDALDRQ.

The protein belongs to the RxLR effector family.

The protein resides in the secreted. The protein localises to the host cytoplasm. Its function is as follows. Secreted effector that acts as an elicitor of hypersensitive response (HR) specifically on plants carrying defense protein RPP13. Recognition of ATR13 by RPP13 initiates defense responses that are effective against oomycete, bacterial and viral pathogens. The allele ATR13-Emco5 recognizes RPP13-Nd, the RPP13 defense protein from Arabidopsis thaliana ecotype Niederzenz. The polypeptide is Avirulence protein ATR13 (Hyaloperonospora arabidopsidis (Peronospora arabidopsidis)).